Consider the following 124-residue polypeptide: Fluoride-specific ion channel FluC (124 aa).

Helical transmembrane passes span 1-21 (MVPLIVAVSVGGIAGTLLRFA), 38-58 (TLAVNIVGCLLIGVLYGLFLI), 69-89 (GLMVGFLGGLTTFSSFSLDTV), and 99-119 (LALGYAAISVFGGLLATWAGL). Na(+)-binding residues include glycine 76 and threonine 79.

This sequence belongs to the fluoride channel Fluc/FEX (TC 1.A.43) family.

The protein resides in the cell inner membrane. It carries out the reaction fluoride(in) = fluoride(out). Na(+) is not transported, but it plays an essential structural role and its presence is essential for fluoride channel function. Functionally, fluoride-specific ion channel. Important for reducing fluoride concentration in the cell, thus reducing its toxicity. In Pseudomonas fluorescens (strain Pf0-1), this protein is Fluoride-specific ion channel FluC.